Here is a 429-residue protein sequence, read N- to C-terminus: Glutamate-1-semialdehyde 2,1-aminomutase 1 (429 aa).

K268 carries the N6-(pyridoxal phosphate)lysine modification.

Belongs to the class-III pyridoxal-phosphate-dependent aminotransferase family. HemL subfamily. In terms of assembly, homodimer. Pyridoxal 5'-phosphate serves as cofactor.

The protein localises to the cytoplasm. It carries out the reaction (S)-4-amino-5-oxopentanoate = 5-aminolevulinate. It participates in porphyrin-containing compound metabolism; protoporphyrin-IX biosynthesis; 5-aminolevulinate from L-glutamyl-tRNA(Glu): step 2/2. This chain is Glutamate-1-semialdehyde 2,1-aminomutase 1, found in Listeria monocytogenes serotype 4b (strain F2365).